Consider the following 177-residue polypeptide: Zinc metalloproteinase-disintegrin-like scutiarin (177 aa).

The Disintegrin domain occupies 1-63; it reads NPCCDAATCK…ECPADVFHKN (63 aa). 10 disulfide bridges follow: Cys3–Cys26, Cys17–Cys23, Cys22–Cys48, Cys35–Cys55, Cys42–Cys74, Cys67–Cys79, Cys86–Cys136, Cys101–Cys147, Cys114–Cys124, and Cys131–Cys173. The short motif at 41–43 is the D/ECD-tripeptide element; the sequence is ECD. The Ca(2+) site is built by Asp43, Pro44, Glu46, Asp58, and Val59.

It belongs to the venom metalloproteinase (M12B) family. P-III subfamily. P-IIIa sub-subfamily. In terms of assembly, monomer. It depends on Zn(2+) as a cofactor. Post-translationally, glycosylated. As to expression, expressed by the venom gland.

Its subcellular location is the secreted. Functionally, snake venom metalloproteinase that impairs hemostasis in the envenomed animal. The chain is Zinc metalloproteinase-disintegrin-like scutiarin from Crotalus scutulatus scutulatus (Mojave rattlesnake).